The following is a 368-amino-acid chain: Glutamate 5-kinase (368 aa).

Lys9 lines the ATP pocket. Residues Ser49, Asp136, and Asn148 each coordinate substrate. Residues 168–169 (TD) and 210–216 (TGGMMTK) each bind ATP. The PUA domain maps to 275–353 (AGIITIDNGA…ADIENVLGYE (79 aa)).

It belongs to the glutamate 5-kinase family.

It is found in the cytoplasm. It carries out the reaction L-glutamate + ATP = L-glutamyl 5-phosphate + ADP. It functions in the pathway amino-acid biosynthesis; L-proline biosynthesis; L-glutamate 5-semialdehyde from L-glutamate: step 1/2. Catalyzes the transfer of a phosphate group to glutamate to form L-glutamate 5-phosphate. The polypeptide is Glutamate 5-kinase (Haemophilus influenzae (strain PittGG)).